The sequence spans 882 residues: Chondroitin sulfate synthase 3 (882 aa).

Over 1-7 (MAVRSRR) the chain is Cytoplasmic. The helical; Signal-anchor for type II membrane protein transmembrane segment at 8–28 (PWMSVALGLVLGFTAASWLIA) threads the bilayer. Residues 29–882 (PRVAELSERK…LGVRYNRTLS (854 aa)) lie on the Lumenal side of the membrane. The disordered stretch occupies residues 46-167 (SYYGRSAAGP…GDGGAAAPSA (122 aa)). 2 stretches are compositionally biased toward low complexity: residues 59-69 (AQQPLPQPQSR) and 120-131 (GATGLPGAPAAE). N-linked (GlcNAc...) asparagine glycosylation is found at Asn155, Asn279, and Asn710. A divalent metal cation-binding residues include Asp720 and His834. The N-linked (GlcNAc...) asparagine glycan is linked to Asn878.

Belongs to the chondroitin N-acetylgalactosaminyltransferase family. It depends on Co(2+) as a cofactor. Mn(2+) serves as cofactor. Cd(2+) is required as a cofactor. As to expression, detected at low levels in brain, cerebral cortex, uterus and small intestine.

The protein localises to the golgi apparatus. It localises to the golgi stack membrane. It carries out the reaction 3-O-(beta-D-GlcA-(1-&gt;3)-beta-D-GalNAc-(1-&gt;4)-beta-D-GlcA-(1-&gt;3)-beta-D-Gal-(1-&gt;3)-beta-D-Gal-(1-&gt;4)-beta-D-Xyl)-L-seryl-[protein] + UDP-N-acetyl-alpha-D-galactosamine = 3-O-(beta-D-GalNAc-(1-&gt;4)-beta-D-GlcA-(1-&gt;3)-beta-D-GalNAc-(1-&gt;4)-beta-D-GlcA-(1-&gt;3)-beta-D-Gal-(1-&gt;3)-beta-D-Gal-(1-&gt;4)-beta-D-Xyl)-L-seryl-[protein] + UDP + H(+). The enzyme catalyses 3-O-{beta-D-GlcA-(1-&gt;3)-[beta-D-GalNAc-(1-&gt;4)-beta-D-GlcA-(1-&gt;3)](n)-beta-D-GalNAc-(1-&gt;4)-beta-D-GlcA-(1-&gt;3)-beta-D-Gal-(1-&gt;3)-beta-D-Gal-(1-&gt;4)-beta-D-Xyl}-L-seryl-[protein] + UDP-N-acetyl-alpha-D-galactosamine = 3-O-{[beta-D-GalNAc-(1-&gt;4)-beta-D-GlcA-(1-&gt;3)](n+1)-beta-D-GalNAc-(1-&gt;4)-beta-D-GlcA-(1-&gt;3)-beta-D-Gal-(1-&gt;3)-beta-D-Gal-(1-&gt;4)-beta-D-Xyl}-L-seryl-[protein] + UDP + H(+). It catalyses the reaction 3-O-(beta-D-GalNAc-(1-&gt;4)-beta-D-GlcA-(1-&gt;3)-beta-D-Gal-(1-&gt;3)-beta-D-Gal-(1-&gt;4)-beta-D-Xyl)-L-seryl-[protein] + UDP-alpha-D-glucuronate = 3-O-(beta-D-GlcA-(1-&gt;3)-beta-D-GalNAc-(1-&gt;4)-beta-D-GlcA-(1-&gt;3)-beta-D-Gal-(1-&gt;3)-beta-D-Gal-(1-&gt;4)-beta-D-Xyl)-L-seryl-[protein] + UDP + H(+). The catalysed reaction is 3-O-{[beta-D-GalNAc-(1-&gt;4)-beta-D-GlcA-(1-&gt;3)](n)-beta-D-GalNAc-(1-&gt;4)-beta-D-GlcA-(1-&gt;3)-beta-D-Gal-(1-&gt;3)-beta-D-Gal-(1-&gt;4)-beta-D-Xyl}-L-seryl-[protein] + UDP-alpha-D-glucuronate = 3-O-{beta-D-GlcA-(1-&gt;3)-[beta-D-GalNAc-(1-&gt;4)-beta-D-GlcA-(1-&gt;3)](n)-beta-D-GalNAc-(1-&gt;4)-beta-D-GlcA-(1-&gt;3)-beta-D-Gal-(1-&gt;3)-beta-D-Gal-(1-&gt;4)-beta-D-Xyl}-L-seryl-[protein] + UDP + H(+). Has both beta-1,3-glucuronic acid and beta-1,4-N-acetylgalactosamine transferase activity. Transfers glucuronic acid (GlcUA) from UDP-GlcUA and N-acetylgalactosamine (GalNAc) from UDP-GalNAc to the non-reducing end of the elongating chondroitin polymer. Specific activity is much reduced compared to CHSY1. The sequence is that of Chondroitin sulfate synthase 3 (CHSY3) from Homo sapiens (Human).